We begin with the raw amino-acid sequence, 569 residues long: Urease subunit alpha (569 aa).

The region spanning 131-569 (GGIDTHIHFI…LPLAQRYLLL (439 aa)) is the Urease domain. Ni(2+)-binding residues include H136, H138, and K219. K219 bears the N6-carboxylysine mark. H221 serves as a coordination point for substrate. Positions 248 and 274 each coordinate Ni(2+). Residue H322 is the Proton donor of the active site. D362 lines the Ni(2+) pocket.

This sequence belongs to the metallo-dependent hydrolases superfamily. Urease alpha subunit family. In terms of assembly, heterotrimer of UreA (gamma), UreB (beta) and UreC (alpha) subunits. Three heterotrimers associate to form the active enzyme. Ni cation serves as cofactor. Carboxylation allows a single lysine to coordinate two nickel ions.

The protein resides in the cytoplasm. It carries out the reaction urea + 2 H2O + H(+) = hydrogencarbonate + 2 NH4(+). It functions in the pathway nitrogen metabolism; urea degradation; CO(2) and NH(3) from urea (urease route): step 1/1. The protein is Urease subunit alpha of Synechococcus sp. (strain CC9605).